A 186-amino-acid polypeptide reads, in one-letter code: Adenylyl-sulfate kinase (186 aa).

17-24 (GLSGAGKT) is a binding site for ATP. The Phosphoserine intermediate role is filled by S91.

Belongs to the APS kinase family.

The catalysed reaction is adenosine 5'-phosphosulfate + ATP = 3'-phosphoadenylyl sulfate + ADP + H(+). It functions in the pathway sulfur metabolism; hydrogen sulfide biosynthesis; sulfite from sulfate: step 2/3. Catalyzes the synthesis of activated sulfate. The chain is Adenylyl-sulfate kinase from Chloroflexus aurantiacus (strain ATCC 29364 / DSM 637 / Y-400-fl).